A 306-amino-acid polypeptide reads, in one-letter code: Palmitoyl-protein thioesterase 1 (306 aa).

Positions 1–27 (MASPGCLWLLAVALLPWTCASRALQHL) are cleaved as a signal peptide. Residue Cys6 is the site of S-palmitoyl cysteine; by ZDHHC3 and ZDHHC7 attachment. Cystine bridges form between Cys45–Cys46, Cys96–Cys128, and Cys152–Cys160. Residue Ser115 is part of the active site. Residues Asn197, Asn212, and Asn232 are each glycosylated (N-linked (GlcNAc...) asparagine). Active-site residues include Asp233 and His289.

It belongs to the palmitoyl-protein thioesterase family. In terms of assembly, interacts with CLN5. Interacts with ATP5F1A and ATP5F1B. Post-translationally, glycosylated.

Its subcellular location is the lysosome. It is found in the secreted. The protein resides in the golgi apparatus. The protein localises to the endoplasmic reticulum. It carries out the reaction S-hexadecanoyl-L-cysteinyl-[protein] + H2O = L-cysteinyl-[protein] + hexadecanoate + H(+). It catalyses the reaction hexadecanoyl-CoA + H2O = hexadecanoate + CoA + H(+). The catalysed reaction is S-hexadecanoyl-N-acetylcysteamine + H2O = N-acetylcysteamine + hexadecanoate + H(+). The enzyme catalyses S-hexadecanoyl-N-acetylcysteine methyl ester + H2O = N-acetylcysteine methyl ester + hexadecanoate + H(+). With respect to regulation, palmitoylation reduces PPT1 enzymatic activity. In terms of biological role, has thioesterase activity against fatty acid thioesters with 14 -18 carbons, including palmitoyl-CoA, S-palmitoyl-N-acetylcysteamine, and palmitoylated proteins. In contrast to PPT2, PPT1 can hydrolyze palmitoylated proteins and palmitoylcysteine. This chain is Palmitoyl-protein thioesterase 1 (PPT1), found in Homo sapiens (Human).